Here is a 321-residue protein sequence, read N- to C-terminus: Glucokinase (321 aa).

ATP is bound at residue 8 to 13; the sequence is ADIGGT.

It belongs to the bacterial glucokinase family.

The protein resides in the cytoplasm. The catalysed reaction is D-glucose + ATP = D-glucose 6-phosphate + ADP + H(+). The polypeptide is Glucokinase (Paramagnetospirillum magneticum (strain ATCC 700264 / AMB-1) (Magnetospirillum magneticum)).